The chain runs to 84 residues: RNA-binding protein Hfq (84 aa).

Positions 9 to 68 (DPYLNTLRKERVPVSIYLVNGIKLQGQIESFDQFVILLKNTVSQMVYKHAISTVVPGRPV) constitute a Sm domain.

Belongs to the Hfq family. As to quaternary structure, homohexamer.

Functionally, RNA chaperone that binds small regulatory RNA (sRNAs) and mRNAs to facilitate mRNA translational regulation in response to envelope stress, environmental stress and changes in metabolite concentrations. Also binds with high specificity to tRNAs. This chain is RNA-binding protein Hfq, found in Stutzerimonas stutzeri (strain A1501) (Pseudomonas stutzeri).